The chain runs to 291 residues: Energy-coupling factor transporter ATP-binding protein EcfA2 (291 aa).

Residues 3–246 (ITFKDVSYTY…PEWLTSKQLG (244 aa)) enclose the ABC transporter domain. 40–47 (GHTGSGKS) contributes to the ATP binding site.

Belongs to the ABC transporter superfamily. Energy-coupling factor EcfA family. In terms of assembly, forms a stable energy-coupling factor (ECF) transporter complex composed of 2 membrane-embedded substrate-binding proteins (S component), 2 ATP-binding proteins (A component) and 2 transmembrane proteins (T component).

It localises to the cell membrane. ATP-binding (A) component of a common energy-coupling factor (ECF) ABC-transporter complex. Unlike classic ABC transporters this ECF transporter provides the energy necessary to transport a number of different substrates. This chain is Energy-coupling factor transporter ATP-binding protein EcfA2, found in Latilactobacillus sakei subsp. sakei (strain 23K) (Lactobacillus sakei subsp. sakei).